Reading from the N-terminus, the 292-residue chain is Glycine--tRNA ligase alpha subunit (292 aa).

This sequence belongs to the class-II aminoacyl-tRNA synthetase family. In terms of assembly, tetramer of two alpha and two beta subunits.

The protein localises to the cytoplasm. The catalysed reaction is tRNA(Gly) + glycine + ATP = glycyl-tRNA(Gly) + AMP + diphosphate. The protein is Glycine--tRNA ligase alpha subunit of Clostridioides difficile (strain 630) (Peptoclostridium difficile).